The following is a 499-amino-acid chain: Maturase K (499 aa).

This sequence belongs to the intron maturase 2 family. MatK subfamily.

Its subcellular location is the plastid. It localises to the chloroplast. Functionally, usually encoded in the trnK tRNA gene intron. Probably assists in splicing its own and other chloroplast group II introns. In Camellia sasanqua (Christmas camellia), this protein is Maturase K.